The following is a 341-amino-acid chain: Serine/threonine-protein kinase PDIK1L (341 aa).

One can recognise a Protein kinase domain in the interval 8-334 (YDLIREVGRG…LELRLVQIAF (327 aa)). Residues 14–22 (VGRGSYGVV) and Lys-37 each bind ATP. The active-site Proton acceptor is the Asp-164.

It belongs to the protein kinase superfamily. Ser/Thr protein kinase family.

The protein resides in the nucleus. It carries out the reaction L-seryl-[protein] + ATP = O-phospho-L-seryl-[protein] + ADP + H(+). The catalysed reaction is L-threonyl-[protein] + ATP = O-phospho-L-threonyl-[protein] + ADP + H(+). The protein is Serine/threonine-protein kinase PDIK1L (Pdik1l) of Mus musculus (Mouse).